A 599-amino-acid polypeptide reads, in one-letter code: Beta-glucuronidase (599 aa).

Residues D160 and N407 each coordinate D-glucuronate. E408 (proton donor) is an active-site residue. D-glucuronate is bound by residues N462, Y468, E501, W546, and K565. E501 (nucleophile) is an active-site residue. The N-K motif motif lies at 563-565; the sequence is NHK.

It belongs to the glycosyl hydrolase 2 family.

It catalyses the reaction a beta-D-glucuronoside + H2O = D-glucuronate + an alcohol. Its activity is regulated as follows. Inhibited by a set of synthetic compounds like thio-urea derivatives and analogs. Inhibitors of gut microbial beta-glucuronidases are expected to block the reactivation of glucuronidated cancer drugs, and to alleviate drug-induced GI toxicity. Its function is as follows. Displays beta-glucuronidase activity with the artificial substrate p-nitrophenyl-beta-D-glucuronide (PNPG). Is likely capable of scavenging glucuronate from a range of chemically distinct xenobiotic and endobiotic glucuronides present in the gastrointestinal (GI) tract, to be able to utilize these diverse sources of carbon. As part of the GI microbiome, this enzyme would be able to reactivate glucuronide drug conjugates, such reactivated compounds can significantly damage the GI tract. In Streptococcus agalactiae serotype V (strain ATCC BAA-611 / 2603 V/R), this protein is Beta-glucuronidase.